The chain runs to 833 residues: Probable glucan 1,3-beta-glucosidase D (833 aa).

Over residues 1-33 the composition is skewed to basic and acidic residues; it reads MPTHSRSRDRYGGRDSDREARYDYDYARRRYAT. The disordered stretch occupies residues 1 to 228; that stretch reads MPTHSRSRDR…RKRQKKLAVV (228 aa). Over 1 to 305 the chain is Cytoplasmic; that stretch reads MPTHSRSRDR…GGRPFWKRKR (305 aa). Positions 34–45 are enriched in acidic residues; it reads DDDDDYDDDELE. Composition is skewed to basic and acidic residues over residues 46 to 75 and 97 to 172; these read HDLTERRYRRDGYRPPRESRARGYYERDAE and YGDD…ETAA. The span at 183 to 196 shows a compositional bias: low complexity; it reads SASHLLSADALAKL. Basic and acidic residues predominate over residues 200-217; that stretch reads YEKEERRKREIAKDAAKA. The helical; Signal-anchor for type II membrane protein transmembrane segment at 306–326 threads the bilayer; sequence WIGLGALIIILVIVIPVAVVV. Residues 327–833 lie on the Extracellular side of the membrane; sequence SKKHDNKSDP…PDFGDLPEYY (507 aa). The disordered stretch occupies residues 331-353; that stretch reads DNKSDPADSQGTSPGKSNLDGLS. A glycan (N-linked (GlcNAc...) asparagine) is linked at Asn332. Residues 337–346 are compositionally biased toward polar residues; sequence ADSQGTSPGK. 6 N-linked (GlcNAc...) asparagine glycosylation sites follow: Asn378, Asn383, Asn395, Asn548, Asn560, and Asn569. Glu599 functions as the Proton donor in the catalytic mechanism. N-linked (GlcNAc...) asparagine glycosylation is found at Asn638, Asn671, and Asn691. Glu704 acts as the Nucleophile in catalysis.

Belongs to the glycosyl hydrolase 5 (cellulase A) family.

Its subcellular location is the cell membrane. It catalyses the reaction Successive hydrolysis of beta-D-glucose units from the non-reducing ends of (1-&gt;3)-beta-D-glucans, releasing alpha-glucose.. Functionally, glucosidase involved in the degradation of cellulosic biomass. Active on lichenan. The sequence is that of Probable glucan 1,3-beta-glucosidase D (exgD) from Aspergillus fumigatus (strain CBS 144.89 / FGSC A1163 / CEA10) (Neosartorya fumigata).